Consider the following 740-residue polypeptide: Ion-translocating oxidoreductase complex subunit C (740 aa).

4Fe-4S ferredoxin-type domains follow at residues 369–397 (GEPQEEQSCIRCSACADACPADLLPQQLY) and 407–436 (KATTHNIADCIECGACAWVCPSNIPLVQYF). The [4Fe-4S] cluster site is built by cysteine 377, cysteine 380, cysteine 383, cysteine 387, cysteine 416, cysteine 419, cysteine 422, and cysteine 426. 2 disordered regions span residues 571 to 590 (LEQQQANAEPEQQVDPRKAA) and 602 to 716 (KLEQ…DPRK). 2 stretches are compositionally biased toward low complexity: residues 573–583 (QQQANAEPEQQ) and 637–647 (QQQANAEPEQQ).

It belongs to the 4Fe4S bacterial-type ferredoxin family. RnfC subfamily. As to quaternary structure, the complex is composed of six subunits: RsxA, RsxB, RsxC, RsxD, RsxE and RsxG. [4Fe-4S] cluster is required as a cofactor.

Its subcellular location is the cell inner membrane. In terms of biological role, part of a membrane-bound complex that couples electron transfer with translocation of ions across the membrane. Required to maintain the reduced state of SoxR. Probably transfers electron from NAD(P)H to SoxR. In Escherichia coli (strain K12), this protein is Ion-translocating oxidoreductase complex subunit C.